A 311-amino-acid polypeptide reads, in one-letter code: Ribosomal RNA small subunit methyltransferase H (311 aa).

S-adenosyl-L-methionine contacts are provided by residues 34-36 (GGH), D54, F80, D104, and Q111.

The protein belongs to the methyltransferase superfamily. RsmH family.

The protein localises to the cytoplasm. The catalysed reaction is cytidine(1402) in 16S rRNA + S-adenosyl-L-methionine = N(4)-methylcytidine(1402) in 16S rRNA + S-adenosyl-L-homocysteine + H(+). Specifically methylates the N4 position of cytidine in position 1402 (C1402) of 16S rRNA. The chain is Ribosomal RNA small subunit methyltransferase H from Teredinibacter turnerae (strain ATCC 39867 / T7901).